The sequence spans 86 residues: U15-lycotoxin-Ls1c (86 aa).

An N-terminal signal peptide occupies residues 1–20; that stretch reads MNSKIFAVLLLLAFLSCVLS. The WAP domain maps to 21–66; sequence DQYCPKSSITACKKMNIRNDCCKDDDCTGGSWCCATPCGNICKYPT. Disulfide bonds link Cys24-Cys54, Cys32-Cys58, Cys41-Cys53, Cys42-Cys80, and Cys47-Cys62.

This sequence belongs to the venom protein 11 family. 01 (wap-1) subfamily. Contains 5 disulfide bonds. Expressed by the venom gland.

Its subcellular location is the secreted. In terms of biological role, has antibacterial activity. In Lycosa singoriensis (Wolf spider), this protein is U15-lycotoxin-Ls1c.